Reading from the N-terminus, the 308-residue chain is Energy-coupling factor transporter ATP-binding protein EcfA2 (308 aa).

The ABC transporter domain occupies 3 to 263 (IEVKNISKVF…VDFLRENEME (261 aa)). 40–47 (GPTGSGKT) contacts ATP.

This sequence belongs to the ABC transporter superfamily. Energy-coupling factor EcfA family. Forms a stable energy-coupling factor (ECF) transporter complex composed of 2 membrane-embedded substrate-binding proteins (S component), 2 ATP-binding proteins (A component) and 2 transmembrane proteins (T component).

Its subcellular location is the cell membrane. Functionally, ATP-binding (A) component of a common energy-coupling factor (ECF) ABC-transporter complex. Unlike classic ABC transporters this ECF transporter provides the energy necessary to transport a number of different substrates. The sequence is that of Energy-coupling factor transporter ATP-binding protein EcfA2 from Mycoplasma mobile (strain ATCC 43663 / 163K / NCTC 11711) (Mesomycoplasma mobile).